Consider the following 258-residue polypeptide: Redox-sensing transcriptional repressor Rex (258 aa).

Positions 26–65 (LYLRALTALSERSVPTVSSEELAAAAGVNSAKLRKDFSYL) form a DNA-binding region, H-T-H motif. Residue 100 to 105 (GIGNLG) participates in NAD(+) binding. Positions 219–258 (AGEEAAADGAAPPVAARKQQRSTGSADQGPDGDVPAVMPA) are disordered. Positions 225–234 (ADGAAPPVAA) are enriched in low complexity.

It belongs to the transcriptional regulatory Rex family. In terms of assembly, homodimer.

Its subcellular location is the cytoplasm. Its function is as follows. Modulates transcription of respiratory genes in response to changes in cellular NADH/NAD(+) redox state. Binds to the DNA sequence motif 5'-TGTGAACGCGTTCACA-3' in the promoter of the cydABCD operon. May play a general role as a sensor of cellular redox balance. The polypeptide is Redox-sensing transcriptional repressor Rex (Streptomyces coelicolor (strain ATCC BAA-471 / A3(2) / M145)).